The sequence spans 154 residues: Deoxyuridine 5'-triphosphate nucleotidohydrolase (154 aa).

Substrate contacts are provided by residues 64–66 (RSG), N77, 81–83 (TID), and K91.

It belongs to the dUTPase family. As to quaternary structure, homotrimer. Requires Mg(2+) as cofactor.

It catalyses the reaction dUTP + H2O = dUMP + diphosphate + H(+). It functions in the pathway pyrimidine metabolism; dUMP biosynthesis; dUMP from dCTP (dUTP route): step 2/2. Its function is as follows. This enzyme is involved in nucleotide metabolism: it produces dUMP, the immediate precursor of thymidine nucleotides and it decreases the intracellular concentration of dUTP so that uracil cannot be incorporated into DNA. This is Deoxyuridine 5'-triphosphate nucleotidohydrolase from Mycobacterium marinum (strain ATCC BAA-535 / M).